The primary structure comprises 380 residues: Succinyl-diaminopimelate desuccinylase (380 aa).

His-66 contributes to the Zn(2+) binding site. Asp-68 is a catalytic residue. Asp-99 contributes to the Zn(2+) binding site. Glu-135 acts as the Proton acceptor in catalysis. Residues Glu-136, Glu-164, and His-350 each contribute to the Zn(2+) site.

This sequence belongs to the peptidase M20A family. DapE subfamily. In terms of assembly, homodimer. Requires Zn(2+) as cofactor. Co(2+) serves as cofactor.

It catalyses the reaction N-succinyl-(2S,6S)-2,6-diaminopimelate + H2O = (2S,6S)-2,6-diaminopimelate + succinate. Its pathway is amino-acid biosynthesis; L-lysine biosynthesis via DAP pathway; LL-2,6-diaminopimelate from (S)-tetrahydrodipicolinate (succinylase route): step 3/3. Its function is as follows. Catalyzes the hydrolysis of N-succinyl-L,L-diaminopimelic acid (SDAP), forming succinate and LL-2,6-diaminopimelate (DAP), an intermediate involved in the bacterial biosynthesis of lysine and meso-diaminopimelic acid, an essential component of bacterial cell walls. This Magnetococcus marinus (strain ATCC BAA-1437 / JCM 17883 / MC-1) protein is Succinyl-diaminopimelate desuccinylase.